We begin with the raw amino-acid sequence, 195 residues long: MKTLYLASGSPRRRELVELLDFKFEILSPQVKEQRQEGETPRQYVSRLAKDKSLAGVAIAPEDFLVLGADTVVVLNGKVLEKPRSEQHAVAMLSALSGQSHQVITAIAISDSQRTLSDIVITDVTFRQLSTQEILDYVATGEPMDKAGAYGIQGKAGCFVKTLNGSYHSVVGLPLVETHELITKFFALVDGKGNS.

Asp70 (proton acceptor) is an active-site residue.

This sequence belongs to the Maf family. YhdE subfamily. Requires a divalent metal cation as cofactor.

Its subcellular location is the cytoplasm. It catalyses the reaction dTTP + H2O = dTMP + diphosphate + H(+). The catalysed reaction is UTP + H2O = UMP + diphosphate + H(+). Its function is as follows. Nucleoside triphosphate pyrophosphatase that hydrolyzes dTTP and UTP. May have a dual role in cell division arrest and in preventing the incorporation of modified nucleotides into cellular nucleic acids. The protein is dTTP/UTP pyrophosphatase of Photorhabdus laumondii subsp. laumondii (strain DSM 15139 / CIP 105565 / TT01) (Photorhabdus luminescens subsp. laumondii).